A 192-amino-acid chain; its full sequence is ATP synthase protein MI25 (192 aa).

A helical transmembrane segment spans residues 29–49 (ISIYNEEMIVARCFIGFLIFS).

Belongs to the ATPase protein MI25 family. F-type ATPases have 2 components, CF(1) - the catalytic core - and CF(0) - the membrane proton channel. CF(1) has five subunits: alpha(3), beta(3), gamma(1), delta(1), epsilon(1). CF(0) has three main subunits: a, b and c.

It is found in the mitochondrion membrane. In terms of biological role, this is one of the chains of the nonenzymatic component (CF(0) subunit) of the mitochondrial ATPase complex. This Triticum timopheevii (Timopheev's wheat) protein is ATP synthase protein MI25.